The chain runs to 245 residues: uncharacterized protein (245 aa).

An N-terminal signal peptide occupies residues 1 to 20; it reads MIKQTIVALLLSVGASSVFA.

This sequence to E.coli YmcB.

This is an uncharacterized protein from Escherichia coli (strain K12).